Here is a 297-residue protein sequence, read N- to C-terminus: MRPALSDYQHVASGKVREIYRVDDEHLLLVASDRISAYDYVLDSTIPDKGRVLTAMSAFFFGLVDAPNHLAGPPDDPRIPDEVLGRALVVRRLEMLPVECVARGYLTGSGLLDYQATGKVCGIALPPGLVEASRFATPLFTPATKAALGDHDENISFDRVVEMVGALRANQLRDRTLQTYVQAADHALTRGIIIADTKFEFGIDRHGNLLLADEIFTPDSSRYWPADDYRAGVVQTSFDKQFVRSWLTGSESGWDRGSDRPPPPLPEHIVEATRARYINAYERISELKFDDWIGPGA.

The protein belongs to the SAICAR synthetase family.

The enzyme catalyses 5-amino-1-(5-phospho-D-ribosyl)imidazole-4-carboxylate + L-aspartate + ATP = (2S)-2-[5-amino-1-(5-phospho-beta-D-ribosyl)imidazole-4-carboxamido]succinate + ADP + phosphate + 2 H(+). Its pathway is purine metabolism; IMP biosynthesis via de novo pathway; 5-amino-1-(5-phospho-D-ribosyl)imidazole-4-carboxamide from 5-amino-1-(5-phospho-D-ribosyl)imidazole-4-carboxylate: step 1/2. In Mycobacterium tuberculosis (strain ATCC 25177 / H37Ra), this protein is Phosphoribosylaminoimidazole-succinocarboxamide synthase.